The primary structure comprises 430 residues: UDP-N-acetylmuramoylalanine--D-glutamate ligase (430 aa).

ATP is bound at residue 109–115; the sequence is GTDGKST.

Belongs to the MurCDEF family.

The protein resides in the cytoplasm. It catalyses the reaction UDP-N-acetyl-alpha-D-muramoyl-L-alanine + D-glutamate + ATP = UDP-N-acetyl-alpha-D-muramoyl-L-alanyl-D-glutamate + ADP + phosphate + H(+). It functions in the pathway cell wall biogenesis; peptidoglycan biosynthesis. Its function is as follows. Cell wall formation. Catalyzes the addition of glutamate to the nucleotide precursor UDP-N-acetylmuramoyl-L-alanine (UMA). The polypeptide is UDP-N-acetylmuramoylalanine--D-glutamate ligase (Thermotoga maritima (strain ATCC 43589 / DSM 3109 / JCM 10099 / NBRC 100826 / MSB8)).